A 164-amino-acid polypeptide reads, in one-letter code: 3-dehydroquinate dehydratase (164 aa).

Tyr22 serves as the catalytic Proton acceptor. 3 residues coordinate substrate: Asn73, His79, and Asp86. The active-site Proton donor is His99. Substrate is bound by residues 100–101 and Arg110; that span reads IS.

This sequence belongs to the type-II 3-dehydroquinase family. In terms of assembly, homododecamer.

It carries out the reaction 3-dehydroquinate = 3-dehydroshikimate + H2O. The protein operates within metabolic intermediate biosynthesis; chorismate biosynthesis; chorismate from D-erythrose 4-phosphate and phosphoenolpyruvate: step 3/7. Catalyzes a trans-dehydration via an enolate intermediate. The polypeptide is 3-dehydroquinate dehydratase (Aliarcobacter butzleri (strain RM4018) (Arcobacter butzleri)).